The chain runs to 403 residues: Serine/threonine transporter SstT (403 aa).

9 consecutive transmembrane segments (helical) span residues 14-34 (VTQIVIGLLAGIALALLAPAI), 44-64 (VFVSALKAVAPVLVFILVMAS), 79-99 (ILWLYLLGTFAAAVVAVFASM), 138-158 (ALLNANFIGVLTWAIGLGVAL), 175-195 (GVTLIVRVVIRFAPLGIFGLV), 214-234 (LAVLIGCMLFVALVMNPLIVF), 295-315 (MAGAAITITVLTLAAVHTLGI), 327-347 (VVAAVCACGASGVAGGSLLLI), and 353-373 (LFGIPSEIAMQVVAVGFIIGV).

It belongs to the dicarboxylate/amino acid:cation symporter (DAACS) (TC 2.A.23) family.

The protein localises to the cell inner membrane. The catalysed reaction is L-serine(in) + Na(+)(in) = L-serine(out) + Na(+)(out). The enzyme catalyses L-threonine(in) + Na(+)(in) = L-threonine(out) + Na(+)(out). Its function is as follows. Involved in the import of serine and threonine into the cell, with the concomitant import of sodium (symport system). The protein is Serine/threonine transporter SstT of Pseudomonas putida (strain ATCC 47054 / DSM 6125 / CFBP 8728 / NCIMB 11950 / KT2440).